The primary structure comprises 864 residues: Leucine--tRNA ligase (864 aa).

A 'HIGH' region motif is present at residues 42-52 (PYPSGRLHMGH). A 'KMSKS' region motif is present at residues 621-625 (KMSKS). ATP is bound at residue lysine 624.

This sequence belongs to the class-I aminoacyl-tRNA synthetase family.

It is found in the cytoplasm. The enzyme catalyses tRNA(Leu) + L-leucine + ATP = L-leucyl-tRNA(Leu) + AMP + diphosphate. The sequence is that of Leucine--tRNA ligase from Alkalilimnicola ehrlichii (strain ATCC BAA-1101 / DSM 17681 / MLHE-1).